The following is a 181-amino-acid chain: MKNDFFNYYKTKIIPQYLKDYNKKKALEVPVIKKIVISRGIGKANTLEINNYIEESIKEFLIMTGQKPKLNRAKKHIAAFKIKKKMILGLSVTLRGAKMYAFLYKFINIILPNIRQFQGIENKQFDSLGNITFPIYSQSNIPELPYNPRVEKRGFNVTINIKAKNVSEAKALCAYLGFPII.

This sequence belongs to the universal ribosomal protein uL5 family. Part of the 50S ribosomal subunit; contacts the 5S rRNA.

The protein resides in the plastid. In terms of biological role, binds 5S rRNA, forms part of the central protuberance of the 50S subunit. The chain is Large ribosomal subunit protein uL5c (rpl5) from Helicosporidium sp. subsp. Simulium jonesii (Green alga).